The following is a 180-amino-acid chain: MKSRLETRYTEQIAPELFKELGYKSVMQVPKLTKIVINMGVGEATTDPKKLDAAVVELEQLTGQKPLVTKAKKSLAVFKLREGMPIGTKVTLRGKKMYDFLDRLTNVALPRVRDFRGVPKTSFDGFGNYTMGIKEQIIFPEIDYDKVQKLRGMDITIVTTAKTNEEAYKLLEKFGMPFAK.

It belongs to the universal ribosomal protein uL5 family. Part of the 50S ribosomal subunit; part of the 5S rRNA/L5/L18/L25 subcomplex. Contacts the 5S rRNA and the P site tRNA. Forms a bridge to the 30S subunit in the 70S ribosome.

Its function is as follows. This is one of the proteins that bind and probably mediate the attachment of the 5S RNA into the large ribosomal subunit, where it forms part of the central protuberance. In the 70S ribosome it contacts protein S13 of the 30S subunit (bridge B1b), connecting the 2 subunits; this bridge is implicated in subunit movement. Contacts the P site tRNA; the 5S rRNA and some of its associated proteins might help stabilize positioning of ribosome-bound tRNAs. The polypeptide is Large ribosomal subunit protein uL5 (Mesoplasma florum (strain ATCC 33453 / NBRC 100688 / NCTC 11704 / L1) (Acholeplasma florum)).